We begin with the raw amino-acid sequence, 290 residues long: Light-independent protochlorophyllide reductase iron-sulfur ATP-binding protein (290 aa).

ATP contacts are provided by residues 10 to 15 and lysine 39; that span reads GIGKST. Serine 14 lines the Mg(2+) pocket. The [4Fe-4S] cluster site is built by cysteine 95 and cysteine 129. Residue 180–181 coordinates ATP; it reads NR.

It belongs to the NifH/BchL/ChlL family. In terms of assembly, homodimer. Protochlorophyllide reductase is composed of three subunits; ChlL, ChlN and ChlB. Requires [4Fe-4S] cluster as cofactor.

The protein resides in the plastid. Its subcellular location is the chloroplast. The catalysed reaction is chlorophyllide a + oxidized 2[4Fe-4S]-[ferredoxin] + 2 ADP + 2 phosphate = protochlorophyllide a + reduced 2[4Fe-4S]-[ferredoxin] + 2 ATP + 2 H2O. Its pathway is porphyrin-containing compound metabolism; chlorophyll biosynthesis (light-independent). Its function is as follows. Component of the dark-operative protochlorophyllide reductase (DPOR) that uses Mg-ATP and reduced ferredoxin to reduce ring D of protochlorophyllide (Pchlide) to form chlorophyllide a (Chlide). This reaction is light-independent. The L component serves as a unique electron donor to the NB-component of the complex, and binds Mg-ATP. This is Light-independent protochlorophyllide reductase iron-sulfur ATP-binding protein from Chaetosphaeridium globosum (Charophycean green alga).